A 1817-amino-acid polypeptide reads, in one-letter code: Breast cancer type 1 susceptibility protein homolog (1817 aa).

N-acetylmethionine is present on methionine 1. The RING-type zinc-finger motif lies at 24–65 (CPICLELIKEPVSTQCDHIFCKFCMLKLLNQKKGPSQCPLCK). Lysine 109 is covalently cross-linked (Glycyl lysine isopeptide (Lys-Gly) (interchain with G-Cter in SUMO2)). At serine 114 the chain carries Phosphoserine. A Glycyl lysine isopeptide (Lys-Gly) (interchain with G-Cter in SUMO2) cross-link involves residue lysine 299. A disordered region spans residues 305 to 346 (RSKQSGAAVSQQSRWADSKETCNGRPVPRTEGKADPNVDSLC). Residues 308–319 (QSGAAVSQQSRW) show a composition bias toward polar residues. Over residues 320-340 (ADSKETCNGRPVPRTEGKADP) the composition is skewed to basic and acidic residues. Lysine 337 is covalently cross-linked (Glycyl lysine isopeptide (Lys-Gly) (interchain with G-Cter in SUMO2)). Serine 393 is modified (phosphoserine). A Glycyl lysine isopeptide (Lys-Gly) (interchain with G-Cter in SUMO2) cross-link involves residue lysine 457. Residues 497–503 (KLKRKRS) carry the Nuclear localization signal motif. Residues lysine 513 and lysine 578 each participate in a glycyl lysine isopeptide (Lys-Gly) (interchain with G-Cter in SUMO2) cross-link. A compositionally biased stretch (polar residues) spans 640–652 (SEETKKNNSNQTP). Disordered regions lie at residues 640–720 (SEET…SPER), 735–768 (NKEL…PDTD), 874–907 (LVGA…SEIS), and 959–982 (GISQ…TDNR). The span at 669–679 (ADAKKNEPNEH) shows a compositional bias: basic and acidic residues. A phosphoserine mark is found at serine 686, serine 706, and serine 717. Positions 744 to 760 (GGEPSGKPTEPSEESTS) are enriched in low complexity. A compositionally biased stretch (basic and acidic residues) spans 891–901 (SRGEQKERQGQ). A compositionally biased stretch (polar residues) spans 959-976 (GISQNSHFRQSVSPLRSS). Serine 975 is modified (phosphoserine; by CHEK2). A Glycyl lysine isopeptide (Lys-Gly) (interchain with G-Cter in SUMO2) cross-link involves residue lysine 1049. The disordered stretch occupies residues 1146–1185 (LRRESSRSPSPVTHASKSRSLHRGSRKLEFSEESDSTEDE). Phosphoserine occurs at positions 1153 and 1155. Basic residues predominate over residues 1161 to 1170 (SKSRSLHRGS). Residues 1176–1185 (SEESDSTEDE) are compositionally biased toward acidic residues. Residues serine 1181 and serine 1242 each carry the phosphoserine modification. The interval 1259–1290 (SSQHSAALGSPANALSQDPDFNPPSKQRRHQA) is disordered. Phosphoserine is present on residues serine 1298, serine 1304, and serine 1344. At threonine 1351 the chain carries Phosphothreonine. Residues 1354-1381 (RATMKDNLIKLQQEMAQLEAVLEQHGSQ) form an interaction with PALB2 region. 2 disordered regions span residues 1375–1486 (LEQH…QEEL) and 1498–1534 (PHNL…DSES). A phosphoserine mark is found at serine 1380, serine 1414, and serine 1482. 2 stretches are compositionally biased toward polar residues: residues 1405–1426 (NRSG…SQNP) and 1473–1485 (RSLQ…SQEE). BRCT domains follow at residues 1588–1682 (PKER…EFEV) and 1701–1800 (SQEK…AYLV).

As to quaternary structure, heterodimer with BARD1. Part of the BRCA1-associated genome surveillance complex (BASC), which contains BRCA1, MSH2, MSH6, MLH1, ATM, BLM, PMS2 and the MRE11-RAD50-NBN protein (MRN) complex. This association could be a dynamic process changing throughout the cell cycle and within subnuclear domains. Component of the BRCA1-A complex, at least composed of BRCA1, BARD1, UIMC1/RAP80, ABRAXAS1, BRCC3/BRCC36, BABAM2 and BABAM1/NBA1. Interacts (via the BRCT domains) with ABRAXAS1 (phosphorylated form); this is important for recruitment to sites of DNA damage. Can form a heterotetramer with two molecules of ABRAXAS1 (phosphorylated form). Component of the BRCA1-RBBP8 complex. Interacts (via the BRCT domains) with RBBP8 ('Ser-327' phosphorylated form); the interaction ubiquitinates RBBP8, regulates CHEK1 activation, and involves RBBP8 in BRCA1-dependent G2/M checkpoint control on DNA damage. Associates with RNA polymerase II holoenzyme. Interacts with SMC1A, NELFB, DCLRE1C, CLSPN. CHEK1, CHEK2, BAP1, BRCC3, UBXN1 and PCLAF. Interacts (via BRCT domains) with BRIP1 (phosphorylated form). Interacts with FANCD2 (ubiquitinated form). Interacts with H2AX (phosphorylated on 'Ser-140'). Interacts (via the BRCT domains) with ACACA (phosphorylated form); the interaction prevents dephosphorylation of ACACA. Part of a BRCA complex containing BRCA1, BRCA2 and PALB2. Interacts directly with PALB2; the interaction is essential for its function in HRR. Interacts directly with BRCA2; the interaction occurs only in the presence of PALB2 which serves as the bridging protein. Interacts (via the BRCT domains) with LMO4; the interaction represses the transcriptional activity of BRCA1. Interacts (via the BRCT domains) with CCAR2 (via N-terminus); the interaction represses the transcriptional activator activity of BRCA1. Interacts with EXD2. Interacts (via C-terminus) with DHX9; this interaction is direct and links BRCA1 to the RNA polymerase II holoenzyme. Interacts with DNA helicase ZGRF1; the interaction is increased following DNA damage induction. Post-translationally, phosphorylated in response to IR, UV, and various stimuli that cause checkpoint activation, probably by ATM or ATR. Phosphorylation at Ser-975 by CHEK2 regulates mitotic spindle assembly. Phosphorylation by AURKA regulates centrosomal microtubule nucleation. Autoubiquitinated, undergoes 'Lys-6'-linked polyubiquitination. 'Lys-6'-linked polyubiquitination does not promote degradation.

Its subcellular location is the nucleus. It is found in the chromosome. It localises to the cytoplasm. The enzyme catalyses S-ubiquitinyl-[E2 ubiquitin-conjugating enzyme]-L-cysteine + [acceptor protein]-L-lysine = [E2 ubiquitin-conjugating enzyme]-L-cysteine + N(6)-ubiquitinyl-[acceptor protein]-L-lysine.. It participates in protein modification; protein ubiquitination. In terms of biological role, E3 ubiquitin-protein ligase that specifically mediates the formation of 'Lys-6'-linked polyubiquitin chains and plays a central role in DNA repair by facilitating cellular responses to DNA damage. It is unclear whether it also mediates the formation of other types of polyubiquitin chains. The BRCA1-BARD1 heterodimer coordinates a diverse range of cellular pathways such as DNA damage repair, ubiquitination and transcriptional regulation to maintain genomic stability. Regulates centrosomal microtubule nucleation. Required for appropriate cell cycle arrests after ionizing irradiation in both the S-phase and the G2 phase of the cell cycle. Required for FANCD2 targeting to sites of DNA damage. Inhibits lipid synthesis by binding to inactive phosphorylated ACACA and preventing its dephosphorylation. Contributes to homologous recombination repair (HRR) via its direct interaction with PALB2, fine-tunes recombinational repair partly through its modulatory role in the PALB2-dependent loading of BRCA2-RAD51 repair machinery at DNA breaks. Component of the BRCA1-RBBP8 complex which regulates CHEK1 activation and controls cell cycle G2/M checkpoints on DNA damage via BRCA1-mediated ubiquitination of RBBP8. Acts as a transcriptional activator. The sequence is that of Breast cancer type 1 susceptibility protein homolog (Brca1) from Rattus norvegicus (Rat).